Consider the following 347-residue polypeptide: 4-hydroxyproline 2-epimerase (347 aa).

Q85 is a substrate binding site. The active-site Proton acceptor is the S93. Substrate contacts are provided by residues G94–S95 and D251. The active-site Proton donor is C255. A substrate-binding site is contributed by G256–T257.

It belongs to the proline racemase family.

It catalyses the reaction trans-4-hydroxy-L-proline = cis-4-hydroxy-D-proline. In terms of biological role, catalyzes the epimerization of trans-4-hydroxy-L-proline (t4LHyp) to cis-4-hydroxy-D-proline (c4DHyp). May be involved in a degradation pathway of t4LHyp. Can also catalyze the epimerization of trans-3-hydroxy-L-proline (t3LHyp) to cis-3-hydroxy-D-proline (c3DHyp) in vitro. Displays no proline racemase activity. The sequence is that of 4-hydroxyproline 2-epimerase from Allorhizobium ampelinum (strain ATCC BAA-846 / DSM 112012 / S4) (Agrobacterium vitis (strain S4)).